The sequence spans 443 residues: Threonine/serine transporter TdcC (443 aa).

Helical transmembrane passes span 22–42, 44–64, 97–117, 140–160, 163–183, 207–227, 261–281, 311–331, 366–386, 389–409, and 423–443; these read TTWT…FFPI, AGFG…PIAF, GVVI…IYGV, FVAL…KDLM, VMSY…LSLI, ILIT…FSPI, MLMV…LSPA, FAIT…FKSF, LSMI…PNIL, IEAM…MYAI, and DNVF…YKLF.

Belongs to the amino acid/polyamine transporter 2 family. SdaC/TdcC subfamily.

Its subcellular location is the cell inner membrane. It catalyses the reaction L-threonine(in) + H(+)(in) = L-threonine(out) + H(+)(out). The catalysed reaction is L-serine(in) + H(+)(in) = L-serine(out) + H(+)(out). Functionally, involved in the import of threonine and serine into the cell, with the concomitant import of a proton (symport system). The protein is Threonine/serine transporter TdcC of Shigella flexneri serotype 5b (strain 8401).